Reading from the N-terminus, the 350-residue chain is Bifunctional methylenetetrahydrofolate dehydrogenase/cyclohydrolase, mitochondrial (350 aa).

The N-terminal 35 residues, 1–35 (MASVSLLSALAVRLLRPTHGCHPRLQPFHLAAVRN), are a transit peptide targeting the mitochondrion. The residue at position 50 (K50) is an N6-acetyllysine; alternate. K50 is covalently cross-linked (Glycyl lysine isopeptide (Lys-Gly) (interchain with G-Cter in SUMO2); alternate). Residues 84–88 (YVLNK) and 131–133 (VQL) contribute to the substrate site. Residues 200 to 202 (GRS) and R233 each bind NAD(+). 309–313 (PGGVG) contacts substrate.

This sequence belongs to the tetrahydrofolate dehydrogenase/cyclohydrolase family. As to quaternary structure, homodimer. Mg(2+) is required as a cofactor.

The protein localises to the mitochondrion. It catalyses the reaction (6R)-5,10-methylene-5,6,7,8-tetrahydrofolate + NAD(+) = (6R)-5,10-methenyltetrahydrofolate + NADH. The enzyme catalyses (6R)-5,10-methenyltetrahydrofolate + H2O = (6R)-10-formyltetrahydrofolate + H(+). In terms of biological role, although its dehydrogenase activity is NAD-specific, it can also utilize NADP at a reduced efficiency. This Mus musculus (Mouse) protein is Bifunctional methylenetetrahydrofolate dehydrogenase/cyclohydrolase, mitochondrial (Mthfd2).